A 131-amino-acid polypeptide reads, in one-letter code: Ribonuclease VapC4 (131 aa).

The region spanning 4-106 is the PINc domain; sequence IVPDTNFLIY…IVATNDKELK (103 aa). Mg(2+) contacts are provided by Asp7 and Asp102.

It belongs to the PINc/VapC protein family. Requires Mg(2+) as cofactor.

Toxic component of a type II toxin-antitoxin (TA) system. An RNase. Its cognate antitoxin is VapB4. The polypeptide is Ribonuclease VapC4 (Methanocaldococcus jannaschii (strain ATCC 43067 / DSM 2661 / JAL-1 / JCM 10045 / NBRC 100440) (Methanococcus jannaschii)).